The primary structure comprises 675 residues: Potassium-transporting ATPase ATP-binding subunit 2 (675 aa).

The next 4 helical transmembrane spans lie at 34–54, 65–85, 216–236, and 245–265; these read IMFVVEVGMLLTLILICFPDI, LITIFIILLITILFANFSEAF, IALFTLLTTLTIIFLVVIVTL, and LILPIAMLIALTVCLIPTTIG. Asp304 serves as the catalytic 4-aspartylphosphate intermediate. ATP-binding positions include Asp341, Glu345, 372 to 379, and Lys390; that span reads FTAETRMS. Residues Asp513 and Asp517 each coordinate Mg(2+). The next 3 helical transmembrane spans lie at 569–591, 611–631, and 644–664; these read ALTTFSLANDVAKYFAILPALMM, AIISALIFNALIIVALIPIAM, and IFINNMLIYGLGGLIVPFLGI.

This sequence belongs to the cation transport ATPase (P-type) (TC 3.A.3) family. Type IA subfamily. As to quaternary structure, the system is composed of three essential subunits: KdpA, KdpB and KdpC.

The protein localises to the cell membrane. It catalyses the reaction K(+)(out) + ATP + H2O = K(+)(in) + ADP + phosphate + H(+). Its function is as follows. Part of the high-affinity ATP-driven potassium transport (or Kdp) system, which catalyzes the hydrolysis of ATP coupled with the electrogenic transport of potassium into the cytoplasm. This subunit is responsible for energy coupling to the transport system and for the release of the potassium ions to the cytoplasm. This Staphylococcus aureus (strain MRSA252) protein is Potassium-transporting ATPase ATP-binding subunit 2.